The chain runs to 213 residues: Octanoyltransferase (213 aa).

The 176-residue stretch at 32-207 (NSTLDEIWLV…NILALLNNPD (176 aa)) folds into the BPL/LPL catalytic domain. Substrate-binding positions include 71-78 (RGGQVTYH), 138-140 (SLG), and 151-153 (GLA). The active-site Acyl-thioester intermediate is the Cys169.

This sequence belongs to the LipB family.

The protein resides in the cytoplasm. It carries out the reaction octanoyl-[ACP] + L-lysyl-[protein] = N(6)-octanoyl-L-lysyl-[protein] + holo-[ACP] + H(+). Its pathway is protein modification; protein lipoylation via endogenous pathway; protein N(6)-(lipoyl)lysine from octanoyl-[acyl-carrier-protein]: step 1/2. Catalyzes the transfer of endogenously produced octanoic acid from octanoyl-acyl-carrier-protein onto the lipoyl domains of lipoate-dependent enzymes. Lipoyl-ACP can also act as a substrate although octanoyl-ACP is likely to be the physiological substrate. This is Octanoyltransferase from Shigella flexneri serotype 5b (strain 8401).